The chain runs to 393 residues: PGA synthase CapB (393 aa).

Requires Mn(2+) as cofactor.

In terms of biological role, catalyzes the biosynthesis of PGA (gamma-polyglutamic acid) from L-glutamate. Both the 44-kDa and the 33-kDa forms are required for PGA synthesis. The protein is PGA synthase CapB (capB) of Bacillus subtilis (strain 168).